Consider the following 423-residue polypeptide: Histidine--tRNA ligase (423 aa).

It belongs to the class-II aminoacyl-tRNA synthetase family. As to quaternary structure, homodimer.

It is found in the cytoplasm. It catalyses the reaction tRNA(His) + L-histidine + ATP = L-histidyl-tRNA(His) + AMP + diphosphate + H(+). The polypeptide is Histidine--tRNA ligase (Prochlorococcus marinus (strain MIT 9211)).